The sequence spans 42 residues: Beta-defensin 6 (42 aa).

Glutamine 1 is modified (pyrrolidone carboxylic acid). Disulfide bonds link cysteine 9-cysteine 38, cysteine 16-cysteine 31, and cysteine 21-cysteine 39.

Belongs to the beta-defensin family. In terms of tissue distribution, neutrophilic granules.

Its subcellular location is the secreted. Its function is as follows. Has bactericidal activity. Active against E.coli ML35 and S.aureus 502A. This is Beta-defensin 6 (DEFB6) from Bos taurus (Bovine).